The sequence spans 332 residues: MLQAIGWPWPGPPADSAWQAMCAMYSQCRPARVIEQHRSGYVVAEAPEVPIKVESLPAWQRRSFPPHERAVVGDWVLLDGRRIVALLPRRTVIKRLAAGEHYRQQLIAANLDTAFIVCGLDGDFNPRRIERYCVLIASGGVEPVVVLTKVDLCVDVAAAVAVLREHSSQALAVVAVDARKAEPVVALYPWLLPGRTVALLGSSGAGKSTLTNTLLGEQRMKVGEVRQRDSRGRHTTTHRALLPLPSGACLIDTPGMRELKFTGEEDLVEEFADIELLATQCRFRDCAHQAEPGCAVRAAIGCGTLDPQRLHHYFKLRGEIVGAADRSMLRRY.

A CP-type G domain is found at 103-259 (RQQLIAANLD…LIDTPGMREL (157 aa)). Residues 148-151 (TKVD) and 201-209 (GSSGAGKST) each bind GTP. Residues Cys-281, Cys-286, His-288, and Cys-294 each contribute to the Zn(2+) site.

It belongs to the TRAFAC class YlqF/YawG GTPase family. RsgA subfamily. Monomer. Associates with 30S ribosomal subunit, binds 16S rRNA. Requires Zn(2+) as cofactor.

It is found in the cytoplasm. In terms of biological role, one of several proteins that assist in the late maturation steps of the functional core of the 30S ribosomal subunit. Helps release RbfA from mature subunits. May play a role in the assembly of ribosomal proteins into the subunit. Circularly permuted GTPase that catalyzes slow GTP hydrolysis, GTPase activity is stimulated by the 30S ribosomal subunit. This is Small ribosomal subunit biogenesis GTPase RsgA from Xylella fastidiosa (strain M23).